A 358-amino-acid polypeptide reads, in one-letter code: MSDATSSKPQIFSIQDLKQAASDKMSQMYRDYYNGGAMDNITLANNEAAFDRYLLRPRVLRNVSNIDMTTTLWGTKAALPLGVSPSAMHRLAHADGEVGTSKACAARHVPMILSALSNDTLEDVSGQSSDGSTPYAIQVSPFKNRQITTNLLNRAKAAGYKAVVLTVDAPMFGRRLDDLRNGFSSGGLGGGIPDLSFDTSATWEEKIAWMKSQTDLEIWVKGVTSPLDAQIAIEQGVDGIIISNHGGRQLDTTPATIDILREIAPIAKGKTRIAIDGGFRRGSDIFKAVALGADFVFVGRIAIWGLAYDGSNGVGLALDLLINEFKLCMGLAGCSKISDISPAHLSILNARGVLESVY.

Positions 6–350 (SSKPQIFSIQ…SPAHLSILNA (345 aa)) constitute an FMN hydroxy acid dehydrogenase domain. Tyrosine 32 is a binding site for a 2-oxocarboxylate. FMN-binding residues include serine 114, glutamine 138, and threonine 166. A 2-oxocarboxylate is bound at residue arginine 175. Lysine 221 contributes to the FMN binding site. Histidine 245 functions as the Proton acceptor in the catalytic mechanism. Position 248 (arginine 248) interacts with a 2-oxocarboxylate. FMN-binding positions include 276–280 (DGGFR) and 299–300 (GR).

It belongs to the FMN-dependent alpha-hydroxy acid dehydrogenase family. It depends on FMN as a cofactor.

Its pathway is mycotoxin biosynthesis. Oxidase; part of the gene cluster that mediates the biosynthesis of fusaric acid, a mycotoxin with low to moderate toxicity to animals and humans, but with high phytotoxic properties. L-aspartate is suggested as fusaric acid amino acid precursor that is activated and further processed to O-acetyl-L-homoserine by cluster enzymes aspartate kinase FUB3 and homoserine O-acetyltransferase FUB5, as well as enzymes of the primary metabolism. The polyketide synthase (PKS) FUB1 generates the triketide trans-2-hexenal which is presumptively released by the hydrolase FUB4 and linked to the NRPS-bound amino acid precursor by NAD(P)-dependent dehydrogenase FUB6. FUB1, FUB4, and the non-canonical NRPS Fub8 may form an enzyme complex. Further processing of the NRPS-bound intermediate might be carried out by FUB6 and the sulfhydrylase FUB7, enabling a spontaneous electrocyclization to close the carbon backbone of fusaric acid. Dihydrofusaric acid is likely to be released via reduction by the thioester reductase (TR) domain of FUB8 whereupon the final oxidation to fusaric acid may (also) be performed by the FMN-dependent dehydrogenase FUB9. The polypeptide is Oxidase FUB9 (Gibberella fujikuroi (strain CBS 195.34 / IMI 58289 / NRRL A-6831) (Bakanae and foot rot disease fungus)).